The following is a 525-amino-acid chain: Neuropilin and tolloid-like protein 2 (525 aa).

Positions 1 to 22 are cleaved as a signal peptide; it reads MALERLCSVLKVLLITVLVVEG. Residues 23–347 lie on the Extracellular side of the membrane; that stretch reads IAVAQKTQDG…GVFEQITKTH (325 aa). 7 disulfides stabilise this stretch: Cys-45–Cys-72, Cys-100–Cys-122, Cys-177–Cys-207, Cys-234–Cys-256, Cys-297–Cys-309, Cys-304–Cys-322, and Cys-316–Cys-331. 2 CUB domains span residues 45–159 and 177–292; these read CGIW…YSFI and CQFE…FTSF. Positions 296-332 constitute an LDL-receptor class A domain; it reads PCTSSTFFCHSNMCINNSLVCNGVQNCAYPWDENHCK. The N-linked (GlcNAc...) asparagine glycan is linked to Asn-311. A helical membrane pass occupies residues 348 to 368; the sequence is GTIIGITSGIVLVLLIISILV. Topologically, residues 369 to 525 are cytoplasmic; sequence QVKQPRKKVM…SAQASISIDF (157 aa). Position 409 is a phosphoserine (Ser-409).

In terms of assembly, interacts with GRIK2 and GRIK3, but neither with AMPA-nor with NMDA-sensitive glutamate receptors. N-glycosylated.

It is found in the membrane. Accessory subunit of neuronal kainate-sensitive glutamate receptors, GRIK2 and GRIK3. Increases kainate-receptor channel activity, slowing the decay kinetics of the receptors, without affecting their expression at the cell surface, and increasing the open probability of the receptor channels. Modulates the agonist sensitivity of kainate receptors. Slows the decay of kainate receptor-mediated excitatory postsynaptic currents (EPSCs), thus directly influencing synaptic transmission. This is Neuropilin and tolloid-like protein 2 (NETO2) from Homo sapiens (Human).